The primary structure comprises 156 residues: Small ribosomal subunit protein uS7 (156 aa).

The protein belongs to the universal ribosomal protein uS7 family. As to quaternary structure, part of the 30S ribosomal subunit. Contacts proteins S9 and S11.

In terms of biological role, one of the primary rRNA binding proteins, it binds directly to 16S rRNA where it nucleates assembly of the head domain of the 30S subunit. Is located at the subunit interface close to the decoding center, probably blocks exit of the E-site tRNA. The protein is Small ribosomal subunit protein uS7 of Pediococcus pentosaceus (strain ATCC 25745 / CCUG 21536 / LMG 10740 / 183-1w).